The sequence spans 349 residues: Probable arabinogalactan endo-beta-1,4-galactanase A (349 aa).

An N-terminal signal peptide occupies residues 1–15 (MLLSFLPLLPLATAA). N-linked (GlcNAc...) asparagine glycosylation is present at N126. E150 functions as the Proton donor in the catalytic mechanism. The active-site Nucleophile is the E261.

This sequence belongs to the glycosyl hydrolase 53 family.

It localises to the secreted. The enzyme catalyses The enzyme specifically hydrolyzes (1-&gt;4)-beta-D-galactosidic linkages in type I arabinogalactans.. Endogalactanase involved in the degradation of plant cell wall polysaccharides, and more particularly of hairy regions of pectin. The chain is Probable arabinogalactan endo-beta-1,4-galactanase A (galA) from Aspergillus terreus (strain NIH 2624 / FGSC A1156).